The following is a 451-amino-acid chain: Trigger factor (451 aa).

Residues 173–258 enclose the PPIase FKBP-type domain; sequence GDRVTVDFVG…LKKVEWAHLP (86 aa).

It belongs to the FKBP-type PPIase family. Tig subfamily.

The protein resides in the cytoplasm. It carries out the reaction [protein]-peptidylproline (omega=180) = [protein]-peptidylproline (omega=0). Involved in protein export. Acts as a chaperone by maintaining the newly synthesized protein in an open conformation. Functions as a peptidyl-prolyl cis-trans isomerase. This chain is Trigger factor, found in Cupriavidus taiwanensis (strain DSM 17343 / BCRC 17206 / CCUG 44338 / CIP 107171 / LMG 19424 / R1) (Ralstonia taiwanensis (strain LMG 19424)).